The following is a 377-amino-acid chain: Guanine nucleotide-binding protein subunit beta (377 aa).

7 WD repeats span residues 63-93 (GHTG…IVWN), 105-135 (LPCA…SIFN), 154-185 (GHKG…VLWD), 202-233 (GHTA…RLWD), 246-276 (GHES…RLFD), 293-323 (GDIP…YVWD), and 339-369 (SHEG…KIWA).

This sequence belongs to the WD repeat G protein beta family. In terms of assembly, g proteins are composed of 3 units, alpha, beta and gamma.

In terms of biological role, guanine nucleotide-binding proteins (G proteins) are involved as a modulator or transducer in various transmembrane signaling systems. The beta and gamma chains are required for the GTPase activity, for replacement of GDP by GTP, and for G protein-effector interaction. This chain is Guanine nucleotide-binding protein subunit beta (GB1), found in Solanum tuberosum (Potato).